Reading from the N-terminus, the 232-residue chain is Ribonuclease 3 (232 aa).

One can recognise an RNase III domain in the interval 5-134 (QTVLKNHFEI…FLGALLLDKD (130 aa)). Glu47 contacts Mg(2+). Asp51 is an active-site residue. The Mg(2+) site is built by Asp120 and Glu123. Glu123 is an active-site residue. One can recognise a DRBM domain in the interval 160-229 (DYKTHLQELL…AKNAVEKGLD (70 aa)).

This sequence belongs to the ribonuclease III family. Homodimer. Mg(2+) serves as cofactor.

It is found in the cytoplasm. The enzyme catalyses Endonucleolytic cleavage to 5'-phosphomonoester.. Functionally, digests double-stranded RNA. Involved in the processing of primary rRNA transcript to yield the immediate precursors to the large and small rRNAs (23S and 16S). Processes some mRNAs, and tRNAs when they are encoded in the rRNA operon. Processes pre-crRNA and tracrRNA of type II CRISPR loci if present in the organism. This is Ribonuclease 3 from Streptococcus pneumoniae (strain ATCC BAA-255 / R6).